We begin with the raw amino-acid sequence, 185 residues long: Biogenesis of lysosome-related organelles complex 1 subunit 5 (185 aa).

Residues 1 to 16 (MSSSNSPVKSTGSPFI) are compositionally biased toward polar residues. Positions 1 to 24 (MSSSNSPVKSTGSPFIQSLKPRDN) are disordered. Positions 98 to 182 (MQDQLASVLK…VTMEKELSKQ (85 aa)) form a coiled coil.

The protein belongs to the BLOC1S5 family. Component of the biogenesis of lysosome-related organelles complex 1 (BLOC-1).

Component of the BLOC-1 complex, a complex that is required for normal biogenesis of lysosome-related organelles (LRO), such as platelet dense granules and melanosomes. Plays a role in intracellular vesicle trafficking. This Xenopus tropicalis (Western clawed frog) protein is Biogenesis of lysosome-related organelles complex 1 subunit 5 (bloc1s5).